The following is a 373-amino-acid chain: Spore germination protein KB (373 aa).

10 helical membrane passes run 11 to 31 (LFVMIIIFELGSSLLITPGSM), 37 to 57 (WIAVLLGCAIGLFLFYLYQGI), 78 to 98 (LSWLFSFLYILYFAYIAARVL), 105 to 125 (LLTFAYHDTPIIIVNALLMVV), 143 to 163 (LLFGAMYLLGAIGLVLIIVSG), 185 to 205 (VFTQTMYVPFGEVVLFVMIFP), 219 to 239 (IAMAISGLIVALTVAINISVL), 269 to 289 (VFFMLALIIGGFFKVSLYLYA), 306 to 326 (LAYPMGLGILILSITIATNFS), and 338 to 358 (LYIHLPFQLLFPLFLFIVAVW).

The protein belongs to the amino acid-polyamine-organocation (APC) superfamily. Spore germination protein (SGP) (TC 2.A.3.9) family.

Its subcellular location is the cell membrane. Its function is as follows. Involved in the germination response to the combination of glucose, fructose, L-asparagine, and KCl. This chain is Spore germination protein KB (gerKB), found in Bacillus subtilis (strain 168).